The following is a 482-amino-acid chain: Putative ankyrin repeat protein FPV232 (482 aa).

ANK repeat units lie at residues 36–65, 69–100, 101–128, 129–161, 166–195, 199–228, 232–265, 270–297, and 301–332; these read IPLI…NVNE, RYLT…DLSS, YEER…DGNR, TIDD…DTKI, KLKT…EVNS, GNNS…NTDH, CGTT…SVNI, LGFT…DPNI, and EKET…LRAF.

This chain is Putative ankyrin repeat protein FPV232, found in Fowlpox virus (strain NVSL) (FPV).